Consider the following 99-residue polypeptide: Acylphosphatase-1 (99 aa).

The residue at position 2 (Ala-2) is an N-acetylalanine. One can recognise an Acylphosphatase-like domain in the interval 9 to 99 (SVDYEVSGRV…LEHTDFQIRK (91 aa)). Catalysis depends on residues Arg-24 and Asn-42.

The protein belongs to the acylphosphatase family. Organ-common type isozyme is found in many different tissues.

The enzyme catalyses an acyl phosphate + H2O = a carboxylate + phosphate + H(+). The sequence is that of Acylphosphatase-1 (ACYP1) from Gallus gallus (Chicken).